The primary structure comprises 497 residues: MQQKTDVILIGAGIMSATLGSLLKELAPEWEIKVFEKLASAGEESSNEWNNAGTGHSALCELNYTSEKADGSIDISKAVKVNEQFQLSRQFWAYLVKSKLIRNPQDFIMPLPHMSLVQGKKNVEFLKNRFEALSKNPLFQGMEFSDAPETLKKWLPLIMEGRTSNEPMAATKIDSGTDVNFGALTRMLFDYLKTKNVELNYKHSVENIKRTKNGLWEVKVHDMNSGKIEHHTAKFVFIGGGGGSLPLLQKTGIPESKHIGGFPVSGLFMVCKNQKVVEQHHAKVYGKAKVGAPPMSVPHLDTRYIDNKKALLFGPFAGFSPKFLKTGSNLDLIGSVKPNNVLTMLAAGVKEMGLTKYLIQQVMLSHEKRMLDFPAFIPNAKSEDWDIVVAGQRVQVIKDTDAGGKGTLQFGTEVVSAADGSIAALLGASPGASTAVHVMLEVLEKCFPSRMIEWEEKIKEMIPSYGISLTENPRLFQDLHTSTGRTLGLNEKETVHN.

The protein belongs to the MQO family. Requires FAD as cofactor.

It catalyses the reaction (S)-malate + a quinone = a quinol + oxaloacetate. The protein operates within carbohydrate metabolism; tricarboxylic acid cycle; oxaloacetate from (S)-malate (quinone route): step 1/1. In Bacillus cereus (strain ATCC 14579 / DSM 31 / CCUG 7414 / JCM 2152 / NBRC 15305 / NCIMB 9373 / NCTC 2599 / NRRL B-3711), this protein is Probable malate:quinone oxidoreductase.